The following is a 241-amino-acid chain: Methylthioribulose-1-phosphate dehydratase (241 aa).

The span at 1–11 (MSSLCDTSNGE) shows a compositional bias: polar residues. The segment at 1–20 (MSSLCDTSNGESHADPCQDK) is disordered. Residue C96 coordinates substrate. Residues H114 and H116 each coordinate Zn(2+). E138 acts as the Proton donor/acceptor in catalysis. H194 is a Zn(2+) binding site.

This sequence belongs to the aldolase class II family. MtnB subfamily. The cofactor is Zn(2+).

Its subcellular location is the cytoplasm. It carries out the reaction 5-(methylsulfanyl)-D-ribulose 1-phosphate = 5-methylsulfanyl-2,3-dioxopentyl phosphate + H2O. The protein operates within amino-acid biosynthesis; L-methionine biosynthesis via salvage pathway; L-methionine from S-methyl-5-thio-alpha-D-ribose 1-phosphate: step 2/6. Functionally, catalyzes the dehydration of methylthioribulose-1-phosphate (MTRu-1-P) into 2,3-diketo-5-methylthiopentyl-1-phosphate (DK-MTP-1-P). Functions in the methionine salvage pathway. May play a role in apoptosis. The sequence is that of Methylthioribulose-1-phosphate dehydratase from Osmerus mordax (Rainbow smelt).